The sequence spans 1382 residues: Insulin receptor (1382 aa).

The first 27 residues, 1–27, serve as a signal peptide directing secretion; that stretch reads MATGGRRGAAAAPLLVAVAALLLGAAG. Extracellular-facing segments span residues 28-758 and 763-956; these read HLYP…PRPS and SLGD…NIAK. Residues cysteine 35 and cysteine 53 are joined by a disulfide bond. N-linked (GlcNAc...) asparagine glycosylation is found at asparagine 43, asparagine 52, asparagine 105, and asparagine 138. 9 cysteine pairs are disulfide-bonded: cysteine 153–cysteine 182, cysteine 186–cysteine 209, cysteine 196–cysteine 215, cysteine 219–cysteine 228, cysteine 223–cysteine 234, cysteine 235–cysteine 243, cysteine 239–cysteine 252, cysteine 255–cysteine 264, and cysteine 268–cysteine 280. Asparagine 242 is a glycosylation site (N-linked (GlcNAc...) asparagine). The N-linked (GlcNAc...) asparagine glycan is linked to asparagine 282. Cystine bridges form between cysteine 286–cysteine 311, cysteine 293–cysteine 301, cysteine 315–cysteine 328, cysteine 331–cysteine 335, and cysteine 339–cysteine 360. N-linked (GlcNAc...) asparagine glycosylation is present at asparagine 322. N-linked (GlcNAc...) asparagine glycosylation occurs at asparagine 364. Serine 400 is modified (phosphoserine). Tyrosine 401 carries the phosphotyrosine modification. Serine 407 is subject to Phosphoserine. N-linked (GlcNAc...) asparagine glycans are attached at residues asparagine 424 and asparagine 445. Cysteine 462 and cysteine 495 are joined by a disulfide. Asparagine 541, asparagine 633, asparagine 651, and asparagine 698 each carry an N-linked (GlcNAc...) asparagine glycan. The Fibronectin type-III 1 domain occupies 624–726; it reads VPLDPISVSN…SQILKELEES (103 aa). 2 cysteine pairs are disulfide-bonded: cysteine 674-cysteine 899 and cysteine 825-cysteine 834. Residues 686–708 are disordered; the sequence is SPPFESEDSQKHNQSEYEDSAGE. Positions 733-741 are insulin-binding; sequence EDYLHNVVF. Residues 746–766 form a disordered region; sequence TSSGTGAEDPRPSRKRRSLGD. Fibronectin type-III domains lie at 757–842 and 853–947; these read PSRK…YVSA and IVGP…VTDY. N-linked (GlcNAc...) asparagine glycosylation is found at asparagine 769 and asparagine 782. N-linked (GlcNAc...) asparagine glycans are attached at residues asparagine 920 and asparagine 933. Residues 957–979 traverse the membrane as a helical segment; it reads IIIGPLIFVFLFSVVIGSIYLFL. Over 980–1382 the chain is Cytoplasmic; that stretch reads RKRQPDGPLG…ILTLPRSNPS (403 aa). 3 positions are modified to phosphotyrosine; by autocatalysis: tyrosine 992, tyrosine 999, and tyrosine 1011. Position 999 (tyrosine 999) is a region of interest, important for interaction with IRS1, SHC1 and STAT5B. In terms of domain architecture, Protein kinase spans 1023-1298; the sequence is ITLLRELGQG…LLKDDLHPSF (276 aa). The ATP site is built by serine 1033 and lysine 1057. Residue lysine 1079 forms a Glycyl lysine isopeptide (Lys-Gly) (interchain with G-Cter in ubiquitin) linkage. Cysteine 1083 is modified (S-nitrosocysteine). An ATP-binding site is contributed by 1104-1110; the sequence is ELMAHGD. The Proton donor/acceptor role is filled by aspartate 1159. ATP-binding positions include 1163–1164 and aspartate 1177; that span reads RN. Phosphotyrosine; by autocatalysis occurs at positions 1185, 1189, 1190, 1355, and 1361. The disordered stretch occupies residues 1360-1382; it reads PYTHMNGGKKNGRILTLPRSNPS. A PIK3R1-binding region spans residues 1361-1364; that stretch reads YTHM.

The protein belongs to the protein kinase superfamily. Tyr protein kinase family. Insulin receptor subfamily. Tetramer of 2 alpha and 2 beta chains linked by disulfide bonds. The alpha chains carry the insulin-binding regions, while the beta chains carry the kinase domain. Forms a hybrid receptor with IGF1R, the hybrid is a tetramer consisting of 1 alpha chain and 1 beta chain of INSR and 1 alpha chain and 1 beta chain of IGF1R. Interacts with SORBS1 but dissociates from it following insulin stimulation. Binds SH2B2. Activated form of INSR interacts (via Tyr-999) with the PTB/PID domains of IRS1 and SHC1. The sequences surrounding the phosphorylated NPXY motif contribute differentially to either IRS1 or SHC1 recognition. Interacts (via tyrosines in the C-terminus) with IRS2 (via PTB domain and 591-786 AA); the 591-786 would be the primary anchor of IRS2 to INSR while the PTB domain would have a stabilizing action on the interaction with INSR. Interacts with the SH2 domains of the 85 kDa regulatory subunit of PI3K (PIK3R1) in vitro, when autophosphorylated on tyrosine residues. Interacts with SOCS7. Interacts (via the phosphorylated Tyr-999), with SOCS3. Interacts (via the phosphorylated Tyr-1185, Tyr-1189, Tyr-1190) with SOCS1. Interacts with CAV2 (tyrosine-phosphorylated form); the interaction is increased with 'Tyr-27'phosphorylation of CAV2. Interacts with ARRB2. Interacts with GRB10; this interaction blocks the association between IRS1/IRS2 and INSR, significantly reduces insulin-stimulated tyrosine phosphorylation of IRS1 and IRS2 and thus decreases insulin signaling. Interacts with GRB7. Interacts with PDPK1. Interacts (via Tyr-1190) with GRB14 (via BPS domain); this interaction protects the tyrosines in the activation loop from dephosphorylation, but promotes dephosphorylation of Tyr-999, this results in decreased interaction with, and phosphorylation of, IRS1. Interacts (via subunit alpha) with ENPP1 (via 485-599 AA); this interaction blocks autophosphorylation. Interacts with PTPRE; this interaction is dependent of Tyr-1185, Tyr-1189 and Tyr-1190 of the INSR. Interacts with STAT5B (via SH2 domain). Interacts with PTPRF. Interacts with ATIC; ATIC together with PRKAA2/AMPK2 and HACD3/PTPLAD1 is proposed to be part of a signaling netwok regulating INSR autophosphorylation and endocytosis. Interacts with the cone snail venom insulin Con-Ins G1. Interacts with the insulin receptor SORL1; this interaction strongly increases its surface exposure, hence strengthens insulin signal reception. Interacts (tyrosine phosphorylated) with CCDC88A/GIV (via SH2-like region); binding requires autophosphorylation of the INSR C-terminal region. Interacts with GNAI3; the interaction is probably mediated by CCDC88A/GIV. Interacts with LMBRD1. Interacts (in response to insulin stimulation) with NCK1; this interaction may recruit PTPN1 to mediate INSR dephosphorylation. Interacts with CD248; this interaction diminishes INSR autophosphorylation. In terms of processing, after being transported from the endoplasmic reticulum to the Golgi apparatus, the single glycosylated precursor is further glycosylated and then cleaved, followed by its transport to the plasma membrane. Autophosphorylated on tyrosine residues in response to insulin. Phosphorylation of Tyr-999 is required for binding to IRS1, SHC1 and STAT5B. Dephosphorylated by PTPRE at Tyr-999, Tyr-1185, Tyr-1189 and Tyr-1190. May also be phosphorylated at Tyr-1185 and Tyr-1190 by mTORC2. Dephosphorylated by PTPRF and PTPN1. Dephosphorylated by PTPN2; down-regulates insulin-induced signaling. Dephosphorylation at Tyr-1189 and Tyr-1190 requires the SH2/SH3 adapter protein NCK1, probably to recruit its interaction partner PTPN1. Post-translationally, S-nitrosylation at Cys-1083 by BLVRB inhibits the receptor tyrosine kinase, thereby inhibiting insulin signaling. In terms of processing, ubiquitinated by MARCHF1; leading to degradation thereby reducing surface INSR expression. Isoform Long and isoform Short are predominantly expressed in tissue targets of insulin metabolic effects: liver, adipose tissue and skeletal muscle but are also expressed in the peripheral nerve, kidney, pulmonary alveoli, pancreatic acini, placenta vascular endothelium, fibroblasts, monocytes, granulocytes, erythrocytes and skin. Isoform Short is preferentially expressed in fetal cells such as fetal fibroblasts, muscle, liver and kidney. Found as a hybrid receptor with IGF1R in muscle, heart, kidney, adipose tissue, skeletal muscle, hepatoma, fibroblasts, spleen and placenta (at protein level). Overexpressed in several tumors, including breast, colon, lung, ovary, and thyroid carcinomas.

Its subcellular location is the cell membrane. The protein resides in the late endosome. It localises to the lysosome. It catalyses the reaction L-tyrosyl-[protein] + ATP = O-phospho-L-tyrosyl-[protein] + ADP + H(+). With respect to regulation, activated in response to insulin. Autophosphorylation activates the kinase activity. PTPN1, PTPRE and PTPRF dephosphorylate important tyrosine residues, thereby reducing INSR activity. Inhibited by ENPP1. GRB10 and GRB14 inhibit the catalytic activity of the INSR, they block access of substrates to the activated receptor. SOCS1 and SOCS3 act as negative regulators of INSR activity, they bind to the activated INRS and interfere with the phosphorylation of INSR substrates. Receptor tyrosine kinase which mediates the pleiotropic actions of insulin. Binding of insulin leads to phosphorylation of several intracellular substrates, including, insulin receptor substrates (IRS1, 2, 3, 4), SHC, GAB1, CBL and other signaling intermediates. Each of these phosphorylated proteins serve as docking proteins for other signaling proteins that contain Src-homology-2 domains (SH2 domain) that specifically recognize different phosphotyrosine residues, including the p85 regulatory subunit of PI3K and SHP2. Phosphorylation of IRSs proteins lead to the activation of two main signaling pathways: the PI3K-AKT/PKB pathway, which is responsible for most of the metabolic actions of insulin, and the Ras-MAPK pathway, which regulates expression of some genes and cooperates with the PI3K pathway to control cell growth and differentiation. Binding of the SH2 domains of PI3K to phosphotyrosines on IRS1 leads to the activation of PI3K and the generation of phosphatidylinositol-(3, 4, 5)-triphosphate (PIP3), a lipid second messenger, which activates several PIP3-dependent serine/threonine kinases, such as PDPK1 and subsequently AKT/PKB. The net effect of this pathway is to produce a translocation of the glucose transporter SLC2A4/GLUT4 from cytoplasmic vesicles to the cell membrane to facilitate glucose transport. Moreover, upon insulin stimulation, activated AKT/PKB is responsible for: anti-apoptotic effect of insulin by inducing phosphorylation of BAD; regulates the expression of gluconeogenic and lipogenic enzymes by controlling the activity of the winged helix or forkhead (FOX) class of transcription factors. Another pathway regulated by PI3K-AKT/PKB activation is mTORC1 signaling pathway which regulates cell growth and metabolism and integrates signals from insulin. AKT mediates insulin-stimulated protein synthesis by phosphorylating TSC2 thereby activating mTORC1 pathway. The Ras/RAF/MAP2K/MAPK pathway is mainly involved in mediating cell growth, survival and cellular differentiation of insulin. Phosphorylated IRS1 recruits GRB2/SOS complex, which triggers the activation of the Ras/RAF/MAP2K/MAPK pathway. In addition to binding insulin, the insulin receptor can bind insulin-like growth factors (IGFI and IGFII). Isoform Short has a higher affinity for IGFII binding. When present in a hybrid receptor with IGF1R, binds IGF1. PubMed:12138094 shows that hybrid receptors composed of IGF1R and INSR isoform Long are activated with a high affinity by IGF1, with low affinity by IGF2 and not significantly activated by insulin, and that hybrid receptors composed of IGF1R and INSR isoform Short are activated by IGF1, IGF2 and insulin. In contrast, PubMed:16831875 shows that hybrid receptors composed of IGF1R and INSR isoform Long and hybrid receptors composed of IGF1R and INSR isoform Short have similar binding characteristics, both bind IGF1 and have a low affinity for insulin. In adipocytes, inhibits lipolysis. This is Insulin receptor (INSR) from Homo sapiens (Human).